The primary structure comprises 144 residues: MASTRTTIIKLIVPAGKATPTPPIGPALGARGLKSIDFCKEFNARTAGWMPNTPVPCKITVTPQRTFTFTIHTPPTSWLISKTLDLEKGSSSPLHDIKGQLSLKHIYEIAKLKSTDPSLQGIELLSLCKSVIGTAKSMGVKVVP.

The N-terminal 32 residues, 1–32 (MASTRTTIIKLIVPAGKATPTPPIGPALGARG), are a transit peptide targeting the mitochondrion.

It belongs to the universal ribosomal protein uL11 family. Component of the mitochondrial large ribosomal subunit (mt-LSU). Mature yeast 74S mitochondrial ribosomes consist of a small (37S) and a large (54S) subunit. The 37S small subunit contains a 15S ribosomal RNA (15S mt-rRNA) and at least 32 different proteins. The 54S large subunit contains a 21S rRNA (21S mt-rRNA) and at least 45 different proteins.

It is found in the mitochondrion. Its subcellular location is the cytoplasm. Its function is as follows. Component of the mitochondrial ribosome (mitoribosome), a dedicated translation machinery responsible for the synthesis of mitochondrial genome-encoded proteins, including at least some of the essential transmembrane subunits of the mitochondrial respiratory chain. The mitoribosomes are attached to the mitochondrial inner membrane and translation products are cotranslationally integrated into the membrane. The chain is Large ribosomal subunit protein uL11m from Schizosaccharomyces pombe (strain 972 / ATCC 24843) (Fission yeast).